A 406-amino-acid polypeptide reads, in one-letter code: Cysteine desulfurase (406 aa).

N6-(pyridoxal phosphate)lysine is present on lysine 226. Cysteine 364 acts as the Cysteine persulfide intermediate in catalysis.

Belongs to the class-V pyridoxal-phosphate-dependent aminotransferase family. Csd subfamily. In terms of assembly, homodimer. Interacts with SufE and the SufBCD complex composed of SufB, SufC and SufD. The interaction with SufE is required to mediate the direct transfer of the sulfur atom from the S-sulfanylcysteine. Pyridoxal 5'-phosphate serves as cofactor.

It localises to the cytoplasm. It catalyses the reaction (sulfur carrier)-H + L-cysteine = (sulfur carrier)-SH + L-alanine. The catalysed reaction is L-selenocysteine + AH2 = hydrogenselenide + L-alanine + A + H(+). It participates in cofactor biosynthesis; iron-sulfur cluster biosynthesis. Functionally, cysteine desulfurases mobilize the sulfur from L-cysteine to yield L-alanine, an essential step in sulfur metabolism for biosynthesis of a variety of sulfur-containing biomolecules. Component of the suf operon, which is activated and required under specific conditions such as oxidative stress and iron limitation. Acts as a potent selenocysteine lyase in vitro, that mobilizes selenium from L-selenocysteine. Selenocysteine lyase activity is however unsure in vivo. This chain is Cysteine desulfurase, found in Escherichia coli O17:K52:H18 (strain UMN026 / ExPEC).